Here is a 91-residue protein sequence, read N- to C-terminus: Small ribosomal subunit protein uS15 (91 aa).

Belongs to the universal ribosomal protein uS15 family. As to quaternary structure, part of the 30S ribosomal subunit. Forms a bridge to the 50S subunit in the 70S ribosome, contacting the 23S rRNA.

Its function is as follows. One of the primary rRNA binding proteins, it binds directly to 16S rRNA where it helps nucleate assembly of the platform of the 30S subunit by binding and bridging several RNA helices of the 16S rRNA. Functionally, forms an intersubunit bridge (bridge B4) with the 23S rRNA of the 50S subunit in the ribosome. The chain is Small ribosomal subunit protein uS15 from Synechococcus sp. (strain JA-2-3B'a(2-13)) (Cyanobacteria bacterium Yellowstone B-Prime).